The primary structure comprises 93 residues: Conotoxin Mr105 (93 aa).

Residues 1-22 (MQRGAVLLGVVALLVLWPQAGA) form the signal peptide. The propeptide occupies 23–33 (ELYDVNDPDVR).

It belongs to the F superfamily. Post-translationally, contains 4 disulfide bonds. In terms of tissue distribution, expressed by the venom duct.

It is found in the secreted. This Conus marmoreus (Marble cone) protein is Conotoxin Mr105.